A 129-amino-acid chain; its full sequence is Small ribosomal subunit protein uS11 (129 aa).

The protein belongs to the universal ribosomal protein uS11 family. In terms of assembly, part of the 30S ribosomal subunit. Interacts with proteins S7 and S18. Binds to IF-3.

Located on the platform of the 30S subunit, it bridges several disparate RNA helices of the 16S rRNA. Forms part of the Shine-Dalgarno cleft in the 70S ribosome. The sequence is that of Small ribosomal subunit protein uS11 from Roseobacter denitrificans (strain ATCC 33942 / OCh 114) (Erythrobacter sp. (strain OCh 114)).